The following is a 296-amino-acid chain: MGWQNVSFLTDVSHAEPMCDALLEAGALSASIEDADAGTPDEQPQFGEPGSVNTPGWMHSRVVVLLEPDADIEALLAEAGAAIGLSEIPAYSVENVAEQNWVQLTQSQFDPIRVSERLWIVPSWHETPDPAAVNLILDPGMAFGTGSHPTTRLCLEWLERNVSEACTVLDYGCGSGILAIAAARLGAGHVAGVDIDPQAVEAARANAERNGVTALFADSATPVAGEYDVVVANILSNPLRVLAPAICAHVRPGGKLALSGILREQIDEIIAIYAQWIPLQVADVREDWVCLAGIKP.

Threonine 151, glycine 172, aspartate 194, and asparagine 233 together coordinate S-adenosyl-L-methionine.

The protein belongs to the methyltransferase superfamily. PrmA family.

The protein localises to the cytoplasm. It catalyses the reaction L-lysyl-[protein] + 3 S-adenosyl-L-methionine = N(6),N(6),N(6)-trimethyl-L-lysyl-[protein] + 3 S-adenosyl-L-homocysteine + 3 H(+). Methylates ribosomal protein L11. The sequence is that of Ribosomal protein L11 methyltransferase from Dechloromonas aromatica (strain RCB).